Consider the following 877-residue polypeptide: DNA mismatch repair protein MutS (877 aa).

630 to 637 contributes to the ATP binding site; sequence GPNMAGKS.

It belongs to the DNA mismatch repair MutS family.

In terms of biological role, this protein is involved in the repair of mismatches in DNA. It is possible that it carries out the mismatch recognition step. This protein has a weak ATPase activity. The protein is DNA mismatch repair protein MutS of Jannaschia sp. (strain CCS1).